The primary structure comprises 150 residues: Large ribosomal subunit protein eL19 (150 aa).

A disordered region spans residues 56 to 89 (KGQSRARARAFQEARKKGRHRGPGSKKGKKTARM). Residues 71 to 89 (KKGRHRGPGSKKGKKTARM) show a composition bias toward basic residues.

The protein belongs to the eukaryotic ribosomal protein eL19 family. In terms of assembly, part of the 50S ribosomal subunit.

In terms of biological role, binds to the 23S rRNA. In Thermococcus kodakarensis (strain ATCC BAA-918 / JCM 12380 / KOD1) (Pyrococcus kodakaraensis (strain KOD1)), this protein is Large ribosomal subunit protein eL19.